The following is an 891-amino-acid chain: Metabotropic glutamate receptor-like protein N (891 aa).

Residues methionine 1–tyrosine 399 lie on the Extracellular side of the membrane. 13 N-linked (GlcNAc...) asparagine glycosylation sites follow: asparagine 52, asparagine 85, asparagine 88, asparagine 125, asparagine 132, asparagine 224, asparagine 298, asparagine 312, asparagine 320, asparagine 325, asparagine 353, asparagine 363, and asparagine 375. Positions asparagine 52–asparagine 91 are disordered. Residues glycine 400–isoleucine 420 traverse the membrane as a helical segment. At lysine 421–proline 433 the chain is on the cytoplasmic side. A helical membrane pass occupies residues threonine 434–valine 454. Over serine 455–threonine 461 the chain is Extracellular. Residues cysteine 462–valine 482 form a helical membrane-spanning segment. The Cytoplasmic portion of the chain corresponds to lysine 483–glutamine 505. A helical membrane pass occupies residues leucine 506–glycine 526. The Extracellular portion of the chain corresponds to leucine 527–glycine 555. The chain crosses the membrane as a helical span at residues leucine 556–valine 576. Over serine 577 to lysine 592 the chain is Cytoplasmic. The helical transmembrane segment at serine 593 to isoleucine 613 threads the bilayer. Residues serine 614–serine 625 are Extracellular-facing. A helical membrane pass occupies residues glycine 626 to leucine 646. The Cytoplasmic portion of the chain corresponds to lysine 647 to glutamine 891. Disordered regions lie at residues glutamine 660 to serine 689, asparagine 742 to proline 827, and aspartate 869 to glutamine 891. Residues asparagine 742–glutamine 767 are compositionally biased toward polar residues. The segment covering proline 772–asparagine 782 has biased composition (low complexity). Positions aspartate 783–arginine 820 are enriched in polar residues. A compositionally biased stretch (acidic residues) spans isoleucine 872–serine 881. The span at serine 882 to glutamine 891 shows a compositional bias: low complexity.

It belongs to the G-protein coupled receptor 3 family. GABA-B receptor subfamily.

It is found in the membrane. The sequence is that of Metabotropic glutamate receptor-like protein N (grlN) from Dictyostelium discoideum (Social amoeba).